The following is a 420-amino-acid chain: Glutamyl-tRNA reductase (420 aa).

Substrate is bound by residues Thr-49 to Arg-52, Ser-109, Glu-114 to Gln-116, and Gln-120. Catalysis depends on Cys-50, which acts as the Nucleophile. NADP(+) is bound at residue Gly-189–Ile-194.

The protein belongs to the glutamyl-tRNA reductase family. Homodimer.

It carries out the reaction (S)-4-amino-5-oxopentanoate + tRNA(Glu) + NADP(+) = L-glutamyl-tRNA(Glu) + NADPH + H(+). Its pathway is porphyrin-containing compound metabolism; protoporphyrin-IX biosynthesis; 5-aminolevulinate from L-glutamyl-tRNA(Glu): step 1/2. In terms of biological role, catalyzes the NADPH-dependent reduction of glutamyl-tRNA(Glu) to glutamate 1-semialdehyde (GSA). The polypeptide is Glutamyl-tRNA reductase (Proteus mirabilis (strain HI4320)).